The primary structure comprises 200 residues: 3-isopropylmalate dehydratase small subunit 2 (200 aa).

This sequence belongs to the LeuD family. LeuD type 1 subfamily. As to quaternary structure, heterodimer of LeuC and LeuD.

The enzyme catalyses (2R,3S)-3-isopropylmalate = (2S)-2-isopropylmalate. It functions in the pathway amino-acid biosynthesis; L-leucine biosynthesis; L-leucine from 3-methyl-2-oxobutanoate: step 2/4. Its function is as follows. Catalyzes the isomerization between 2-isopropylmalate and 3-isopropylmalate, via the formation of 2-isopropylmaleate. The sequence is that of 3-isopropylmalate dehydratase small subunit 2 from Mannheimia succiniciproducens (strain KCTC 0769BP / MBEL55E).